The following is an 818-amino-acid chain: Dipeptidyl-peptidase 7 (818 aa).

Positions M1–A22 are cleaved as a signal peptide. Residues H87, D223, and S645 each act as charge relay system in the active site.

This sequence belongs to the peptidase S46 family.

In terms of biological role, catalyzes the removal of dipeptides from the N-terminus of oligopeptides. Most efficiently cleaves the synthetic substrate Met-Leu-methylcoumaryl-7-amide (Met-Leu-MCA), and slowly hydrolyzes Leu-Gln-, Lys-Ala-, Leu-Arg, and Ala-Asn-MCA. Is likely involved in amino acid metabolism and bacterial growth/survival of asaccharolytic P.endodontalis, that utilizes amino acids from extracellular proteinaceous nutrients as energy and carbon sources. This chain is Dipeptidyl-peptidase 7, found in Porphyromonas endodontalis (strain ATCC 35406 / DSM 24491 / JCM 8526 / CCUG 16442 / BCRC 14492 / NCTC 13058 / HG 370) (Bacteroides endodontalis).